A 292-amino-acid chain; its full sequence is 11-beta-hydroxysteroid dehydrogenase 1 (292 aa).

The Cytoplasmic segment spans residues 1-7 (MAFMKKY). Residues 8–24 (LLPILGLFMAYYYYSAN) traverse the membrane as a helical; Signal-anchor for type II membrane protein segment. Topologically, residues 25 to 292 (EEFRPEMLQG…SYNMDRFINK (268 aa)) are lumenal. Residues 41–67 (GASKGIGREMAYHLAKMGAHVVVTARS), 92–93 (TM), and 119–121 (NHI) contribute to the NADP(+) site. Asn123 and Asn162 each carry an N-linked (GlcNAc...) asparagine glycan. Position 170 (Ser170) interacts with substrate. The active-site Proton acceptor is the Tyr183. Residue 183–187 (YSASK) participates in NADP(+) binding. A glycan (N-linked (GlcNAc...) asparagine) is linked at Asn207. 218–222 (IDTET) provides a ligand contact to NADP(+).

This sequence belongs to the short-chain dehydrogenases/reductases (SDR) family. In terms of assembly, homodimer. Post-translationally, glycosylated. In terms of tissue distribution, widely expressed, highest expression in liver, lower in testis, ovary, lung, foreskin fibroblasts, and much lower in kidney. Expressed in liver (at protein level). Expressed in the basal cells of the corneal epithelium and in the ciliary nonpigmented epithelium (both at mRNA and at protein level).

It is found in the endoplasmic reticulum membrane. The catalysed reaction is an 11beta-hydroxysteroid + NADP(+) = an 11-oxosteroid + NADPH + H(+). It catalyses the reaction cortisone + NADPH + H(+) = cortisol + NADP(+). The enzyme catalyses corticosterone + NADP(+) = 11-dehydrocorticosterone + NADPH + H(+). It carries out the reaction a 7beta-hydroxysteroid + NADP(+) = a 7-oxosteroid + NADPH + H(+). The catalysed reaction is 7-oxocholesterol + NADPH + H(+) = 7beta-hydroxycholesterol + NADP(+). It catalyses the reaction chenodeoxycholate + NADP(+) = 7-oxolithocholate + NADPH + H(+). The enzyme catalyses 7-oxolithocholate + NADPH + H(+) = ursodeoxycholate + NADP(+). It carries out the reaction glycochenodeoxycholate + NADP(+) = 7-oxoglycolithocholate + NADPH + H(+). The catalysed reaction is taurochenodeoxycholate + NADP(+) = 7-oxotaurolithocholate + NADPH + H(+). It catalyses the reaction tauroursodeoxycholate + NADP(+) = 7-oxotaurolithocholate + NADPH + H(+). The enzyme catalyses glycoursodeoxycholate + NADP(+) = 7-oxoglycolithocholate + NADPH + H(+). It carries out the reaction 7-oxopregnenolone + NADPH + H(+) = 7beta-hydroxypregnenolone + NADP(+). The catalysed reaction is 3beta,7alpha-dihydroxyandrost-5-en-17-one + NADP(+) = 3beta-hydroxy-5-androstene-7,17-dione + NADPH + H(+). It catalyses the reaction 3beta-hydroxy-5-androstene-7,17-dione + NADPH + H(+) = 3beta,7beta-dihydroxyandrost-5-en-17-one + NADP(+). The enzyme catalyses 3beta-hydroxy-5alpha-androstane-7,17-dione + NADPH + H(+) = 3beta,7beta-dihydroxy-5alpha-androstan-17-one + NADP(+). It participates in steroid metabolism. With respect to regulation, hexose-6-phosphate dehydrogenase (H6PD) provides cosubstrate NADPH, and the glucose-6-phosphate transporter in the ER-membrane supplies the substrate for H6PDH, their activities stimulate the reduction of cortisone and abolish the oxidation of cortisol. Controls the reversible conversion of biologically active glucocorticoids such as cortisone to cortisol, and 11-dehydrocorticosterone to corticosterone in the presence of NADP(H). Participates in the corticosteroid receptor-mediated anti-inflammatory response, as well as metabolic and homeostatic processes. Plays a role in the secretion of aqueous humor in the eye, maintaining a normotensive, intraocular environment. Bidirectional in vitro, predominantly functions as a reductase in vivo, thereby increasing the concentration of active glucocorticoids. It has broad substrate specificity, besides glucocorticoids, it accepts other steroid and sterol substrates. Interconverts 7-oxo- and 7-hydroxy-neurosteroids such as 7-oxopregnenolone and 7beta-hydroxypregnenolone, 7-oxodehydroepiandrosterone (3beta-hydroxy-5-androstene-7,17-dione) and 7beta-hydroxydehydroepiandrosterone (3beta,7beta-dihydroxyandrost-5-en-17-one), among others. Catalyzes the stereo-specific conversion of the major dietary oxysterol, 7-ketocholesterol (7-oxocholesterol), into the more polar 7-beta-hydroxycholesterol metabolite. 7-oxocholesterol is one of the most important oxysterols, it participates in several events such as induction of apoptosis, accumulation in atherosclerotic lesions, lipid peroxidation, and induction of foam cell formation. Mediates the 7-oxo reduction of 7-oxolithocholate mainly to chenodeoxycholate, and to a lesser extent to ursodeoxycholate, both in its free form and when conjugated to glycine or taurine, providing a link between glucocorticoid activation and bile acid metabolism. Catalyzes the synthesis of 7-beta-25-dihydroxycholesterol from 7-oxo-25-hydroxycholesterol in vitro, which acts as a ligand for the G-protein-coupled receptor (GPCR) Epstein-Barr virus-induced gene 2 (EBI2) and may thereby regulate immune cell migration. The protein is 11-beta-hydroxysteroid dehydrogenase 1 of Homo sapiens (Human).